We begin with the raw amino-acid sequence, 427 residues long: Ceramide Synthase FUM18 (427 aa).

Asn-20 carries an N-linked (GlcNAc...) asparagine glycan. The next 6 helical transmembrane spans lie at 38–58, 131–151, 173–193, 202–222, 250–270, and 335–355; these read ILPL…IHIS, EQGW…LIWA, GLIK…VISV, YWLN…CYVY, YLGF…TWIV, and VSIL…FGFI. One can recognise a TLC domain in the interval 124 to 364; sequence RKVVRFSEQG…ICKVAIGVLD (241 aa). Residues 373–406 form a disordered region; sequence SDVESDEEDSEPVANGSGWQQSQLQPGRRVGSNG. An N-linked (GlcNAc...) asparagine glycan is attached at Asn-387.

This sequence belongs to the sphingosine N-acyltransferase family.

The protein resides in the endoplasmic reticulum membrane. It functions in the pathway mycotoxin biosynthesis. Functionally, ceramide synthase; part of the gene cluster that mediates the biosynthesis of fumonisins B1 (FB1), B2 (FB2), B3 (FB3), and B4 (FB4), which are carcinogenic mycotoxins. Plays a role in self-protection from FB1 toxicity by contributing to ceramide synthesis. The biosynthesis starts with the FUM1-catalyzed carbon chain assembly from one molecule of acetyl-CoA, eight molecules of malonyl-CoA, and two molecules of methionine (in S-adenosyl form). The C18 polyketide chain is released from the enzyme by a nucleophilic attack of a carbanion, which is derived from R-carbon of alanine by decarboxylation, on the carbonyl carbon of polyketide acyl chain. This step is catalyzed by the pyridoxal 5'-phosphate-dependent aminoacyl transferase FUM8. The resultant 3-keto intermediate is then stereospecifically reduced to a 3-hydroxyl product by reductase FUM13. Subsequent oxidations at C-10 by the cytochrome P450 monooxygenase FUM2, C-14 and C-15 by FUM6, FUM12 or FUM15, tricarballylic esterification of the hydroxyl groups on C-14 and C-15 by acyltransferase FUM14, and C-5 hydroxylation by 2-keto-glutarate-dependent dioxygenase FUM3 furnish the biosynthesis of fumonisins. The tricarballylic moieties are most likely derived from the citric acid cycle, and their addition to the carbon backbone may involve FUM7, FUM10, FUM11 and FUM14. The chain is Ceramide Synthase FUM18 from Gibberella moniliformis (strain M3125 / FGSC 7600) (Maize ear and stalk rot fungus).